The primary structure comprises 307 residues: Ornithine carbamoyltransferase (307 aa).

Carbamoyl phosphate contacts are provided by residues 51 to 54, Q78, R102, and 129 to 132; these read STRT and HPVQ. L-ornithine contacts are provided by residues N159, D223, and 227-228; that span reads SM. Carbamoyl phosphate-binding positions include 263–264 and R291; that span reads CL.

This sequence belongs to the aspartate/ornithine carbamoyltransferase superfamily. OTCase family.

It is found in the cytoplasm. The catalysed reaction is carbamoyl phosphate + L-ornithine = L-citrulline + phosphate + H(+). It functions in the pathway amino-acid biosynthesis; L-arginine biosynthesis; L-arginine from L-ornithine and carbamoyl phosphate: step 1/3. Its function is as follows. Reversibly catalyzes the transfer of the carbamoyl group from carbamoyl phosphate (CP) to the N(epsilon) atom of ornithine (ORN) to produce L-citrulline. This chain is Ornithine carbamoyltransferase, found in Wolinella succinogenes (strain ATCC 29543 / DSM 1740 / CCUG 13145 / JCM 31913 / LMG 7466 / NCTC 11488 / FDC 602W) (Vibrio succinogenes).